Reading from the N-terminus, the 933-residue chain is MAKISLKLDELIDGEALRREMTALTTATAGDGSGAAARAGVLQLLKARLAEGRKIAEAMLKEDGGGNACAERLSHLMDELIRALYDFAATHVYRVKNRSSAERMAVVAVGGYGRGTLAPGSDIDLLFLLPYKQTPWGEQTVEYMLYMLWDLGLKVGHATRNIDECLRLSRTDITIRTSILEARFLWGERKLYDELMLRFDHEVVRTTGPEYVQAKLAERDERHAKAGESRYLVEPNVKDGKGGLRDLQTLFWIGKYFYRVRTGEELVEKGVFTEAEYREFQKAEDFLWAVRCHMHFLTGKAEERLHFDIQREIAERLGYTTHPGLSAVERFMKHYFLVAKDVGDLTRIFCAALEEEQAKHVPGFNRIFLTFQRRKRKLAGTSDFIVDNHRINIADDQVFERDPVNLLRLFWFADKHGLEFHPDALKLLTRSLGLVNKSLRRDEEANRLFLDILTSDRNAELNLRRMNEAGLLGRLIPDFGKIVAMMQFSMYHHYTVDEHLIRCIGVLAEIERGDGEKVHPLSHSLMPGLKKSREALYVAVLLHDIAKGRPEDHSEAGARIARRICPHMGLSAADTETVAWLVENHLAMSMTAQTRDLNDRKTIEDFASIVQSVERLKLLLVLTVCDIRGVGPGVWNGWKGQLLRTLYYETELLLTGGFSEVSRAQRTAAARERLAEALADWPDKDRKRYVGLHYENYLLTVDLPDQLRHAEFVREADAAGKKLATMVKTHQFEAVTEITVLAQDHPRLLSVIAGACVGAGGNIVDAQIFTTADGRALDTILISREFDRDEDERRRAERVGRLIEDVLSGKSWLPEMIEKRTKPKRGAKVFKIPPRAEIRNTLSNRFSVIEVEGLDRPGLLSEITGTLSDLSLDIASAHITTFGEKVIDTFYVTDLTGQKIDSPARIATIRNRLMATLEGIAPERGGKAKAAAE.

The uridylyltransferase stretch occupies residues 1 to 379 (MAKISLKLDE…TFQRRKRKLA (379 aa)). The tract at residues 380 to 736 (GTSDFIVDNH…VKTHQFEAVT (357 aa)) is uridylyl-removing. Residues 496-619 (VDEHLIRCIG…VQSVERLKLL (124 aa)) form the HD domain. ACT domains follow at residues 737 to 818 (EITV…EMIE) and 848 to 922 (VIEV…GIAP).

Belongs to the GlnD family. Mg(2+) serves as cofactor.

It carries out the reaction [protein-PII]-L-tyrosine + UTP = [protein-PII]-uridylyl-L-tyrosine + diphosphate. The enzyme catalyses [protein-PII]-uridylyl-L-tyrosine + H2O = [protein-PII]-L-tyrosine + UMP + H(+). Its activity is regulated as follows. Uridylyltransferase (UTase) activity is inhibited by glutamine, while glutamine activates uridylyl-removing (UR) activity. In terms of biological role, modifies, by uridylylation and deuridylylation, the PII regulatory proteins (GlnB and homologs), in response to the nitrogen status of the cell that GlnD senses through the glutamine level. Under low glutamine levels, catalyzes the conversion of the PII proteins and UTP to PII-UMP and PPi, while under higher glutamine levels, GlnD hydrolyzes PII-UMP to PII and UMP (deuridylylation). Thus, controls uridylylation state and activity of the PII proteins, and plays an important role in the regulation of nitrogen fixation and metabolism. The polypeptide is Bifunctional uridylyltransferase/uridylyl-removing enzyme (Mesorhizobium japonicum (strain LMG 29417 / CECT 9101 / MAFF 303099) (Mesorhizobium loti (strain MAFF 303099))).